The primary structure comprises 192 residues: Thiol-disulfide oxidoreductase ResA (192 aa).

The helical; Signal-anchor for type II membrane protein transmembrane segment at 22–41 threads the bilayer; sequence SSILLILVAAVVFAIVSNMK. The Thioredoxin domain occupies 47-189; that stretch reads YRVGDAAPDF…LEGYLNDIAP (143 aa). A disulfide bridge links cysteine 89 with cysteine 92.

This sequence belongs to the thioredoxin family. ResA subfamily.

It is found in the cell membrane. The protein operates within protein modification; cytochrome c assembly. Its function is as follows. Thiol-disulfide oxidoreductase which is required in disulfide reduction during c-type cytochrome synthesis. May accept reducing equivalents from CcdA, leading to breakage of disulfide bonds in apocytochrome c; following this reduction heme can be covalently attached. This Oceanobacillus iheyensis (strain DSM 14371 / CIP 107618 / JCM 11309 / KCTC 3954 / HTE831) protein is Thiol-disulfide oxidoreductase ResA.